The sequence spans 527 residues: MVVLAAAIVVKSGKVIVSRHYVDMSRIRIEGLLAAFPKLVGMGKQHTYIETENVRYVYQPIEALFLLLVTTKQSNILEDLATLTLLSKLVPEYSMSLDEEGISRASFELIFAFDEVISLGHKESVTVAQVKQYCEMESHEEKLHKLVMQSKINDTKDVMKRKANEIDKSKIEKNKPGGFSSMGSMGSGRLESGFNELSISSGGGGGYGSGSGFGMISDVDPINTKPKDRSRSSVTAPPKSSGMKLGKSGKNQLMESLKAEGEDVIEDVKPTGQSKAAAPPPTDPFTLTVEEKLNVALRRDGGLSSFDMQGTLSLQILNQEDGFVQVQIATGENPEILFKTHPNINRDMFNNENILGLKRPDQPFPTGQGGDGVGLLRWRMQRADESMVPLTINCWPSVSGNETYVSLEYEASSMFDLTNVIISVPLPALREAPSVRQCDGEWRYDPRNSVLEWSILLIDNSNRSGSMEFVVPPVDSSVFFPISVQFAATSTYSGLKVTGMIPLRGGGGATPRFVQRTQLIAQNYQVI.

A compositionally biased stretch (basic and acidic residues) spans 166–175 (IDKSKIEKNK). Disordered stretches follow at residues 166 to 187 (IDKSKIEKNKPGGFSSMGSMGS) and 217 to 250 (SDVDPINTKPKDRSRSSVTAPPKSSGMKLGKSGK). 2 stretches are compositionally biased toward low complexity: residues 177–187 (GGFSSMGSMGS) and 239–250 (KSSGMKLGKSGK). The region spanning 282–527 (TDPFTLTVEE…QLIAQNYQVI (246 aa)) is the MHD domain.

This sequence belongs to the adaptor complexes medium subunit family. Delta-COP subfamily. As to quaternary structure, oligomeric complex that consists of at least the alpha, beta, beta', gamma, delta, epsilon and zeta subunits.

It localises to the cytoplasm. The protein localises to the golgi apparatus membrane. It is found in the cytoplasmic vesicle. Its subcellular location is the COPI-coated vesicle membrane. Functionally, the coatomer is a cytosolic protein complex that binds to dilysine motifs and reversibly associates with Golgi non-clathrin-coated vesicles, which further mediate biosynthetic protein transport from the ER, via the Golgi up to the trans Golgi network. Coatomer complex is required for budding from Golgi membranes, and is essential for the retrograde Golgi-to-ER transport of dilysine-tagged proteins. The sequence is that of Coatomer subunit delta from Arabidopsis thaliana (Mouse-ear cress).